Here is a 202-residue protein sequence, read N- to C-terminus: Holliday junction branch migration complex subunit RuvA (202 aa).

Residues 1 to 64 (MIGRLRGSLA…EDAHLLYGFY (64 aa)) form a domain I region. A domain II region spans residues 65–143 (EKRERELFRE…AWESLPGTFT (79 aa)). A flexible linker region spans residues 144-153 (LVSNGPNQAE). The segment at 154–202 (PVASAESDAVSALISLGYKPQEASKAVSAIKEKDLSSADLIRRALKGMG) is domain III.

It belongs to the RuvA family. As to quaternary structure, homotetramer. Forms an RuvA(8)-RuvB(12)-Holliday junction (HJ) complex. HJ DNA is sandwiched between 2 RuvA tetramers; dsDNA enters through RuvA and exits via RuvB. An RuvB hexamer assembles on each DNA strand where it exits the tetramer. Each RuvB hexamer is contacted by two RuvA subunits (via domain III) on 2 adjacent RuvB subunits; this complex drives branch migration. In the full resolvosome a probable DNA-RuvA(4)-RuvB(12)-RuvC(2) complex forms which resolves the HJ.

It localises to the cytoplasm. The RuvA-RuvB-RuvC complex processes Holliday junction (HJ) DNA during genetic recombination and DNA repair, while the RuvA-RuvB complex plays an important role in the rescue of blocked DNA replication forks via replication fork reversal (RFR). RuvA specifically binds to HJ cruciform DNA, conferring on it an open structure. The RuvB hexamer acts as an ATP-dependent pump, pulling dsDNA into and through the RuvAB complex. HJ branch migration allows RuvC to scan DNA until it finds its consensus sequence, where it cleaves and resolves the cruciform DNA. The chain is Holliday junction branch migration complex subunit RuvA from Pseudomonas savastanoi pv. phaseolicola (strain 1448A / Race 6) (Pseudomonas syringae pv. phaseolicola (strain 1448A / Race 6)).